We begin with the raw amino-acid sequence, 176 residues long: Large ribosomal subunit protein uL6 (176 aa).

Residues 151–170 (RPPEPYKGKGVRYADEQVRR) show a composition bias toward basic and acidic residues. The disordered stretch occupies residues 151–176 (RPPEPYKGKGVRYADEQVRRKEAKKK).

It belongs to the universal ribosomal protein uL6 family. In terms of assembly, part of the 50S ribosomal subunit.

Functionally, this protein binds to the 23S rRNA, and is important in its secondary structure. It is located near the subunit interface in the base of the L7/L12 stalk, and near the tRNA binding site of the peptidyltransferase center. The polypeptide is Large ribosomal subunit protein uL6 (Shewanella loihica (strain ATCC BAA-1088 / PV-4)).